A 436-amino-acid chain; its full sequence is Immediate-early phosphoprotein 57 (436 aa).

Residues 71-140 (VPKRERSKTP…TPSNQNPLTE (70 aa)) form a disordered region. Residues 104–119 (QRPAPSARSRRPQPYS) show a composition bias toward low complexity. Residues 127-138 (KPQSTPSNQNPL) are compositionally biased toward polar residues.

It belongs to the herpesviridae UL69 family.

Its subcellular location is the host nucleus. It localises to the host cytoplasm. In terms of biological role, acts at a post-transcriptional level to regulate viral gene expression. In Alcelaphine herpesvirus 1 (strain C500) (AlHV-1), this protein is Immediate-early phosphoprotein 57 (57).